A 157-amino-acid chain; its full sequence is UPF0262 protein Rleg2_0240 (157 aa).

This sequence belongs to the UPF0262 family.

This Rhizobium leguminosarum bv. trifolii (strain WSM2304) protein is UPF0262 protein Rleg2_0240.